Consider the following 219-residue polypeptide: Elongation factor Ts, chloroplastic (219 aa).

It belongs to the EF-Ts family.

Its subcellular location is the plastid. The protein localises to the chloroplast. In terms of biological role, associates with the EF-Tu.GDP complex and induces the exchange of GDP to GTP. It remains bound to the aminoacyl-tRNA.EF-Tu.GTP complex up to the GTP hydrolysis stage on the ribosome. This is Elongation factor Ts, chloroplastic (tsf) from Guillardia theta (Cryptophyte).